Reading from the N-terminus, the 1447-residue chain is Netrin receptor DCC (1447 aa).

The signal sequence occupies residues 1–25 (MENSLGCVWVPKLAFVLFGASLLSA). Residues 26-1097 (HLQVTGFQIK…GSVTPQKNSN (1072 aa)) lie on the Extracellular side of the membrane. Ig-like C2-type domains follow at residues 36-135 (PFTS…AKVT), 139-229 (PLRF…AEVR), 234-326 (PGLH…AELT), and 331-416 (PWFL…AQLI). Residues Asn60 and Asn94 are each glycosylated (N-linked (GlcNAc...) asparagine). Disulfide bonds link Cys61/Cys117, Cys161/Cys212, and Cys261/Cys310. N-linked (GlcNAc...) asparagine glycans are attached at residues Asn299 and Asn318. A disulfide bridge links Cys352 with Cys400. 6 Fibronectin type-III domains span residues 431 to 524 (APRD…TQPE), 530 to 620 (PVEN…TLSD), 625 to 718 (PPQN…TPEN), 728 to 821 (QPSS…TDPT), 846 to 942 (PPVG…TYEA), and 947 to 1044 (APKD…TLKV). A glycan (N-linked (GlcNAc...) asparagine) is linked at Asn478. N-linked (GlcNAc...) asparagine glycans are attached at residues Asn628 and Asn702. Residues 1098-1122 (LLVITVVTVGVLTVLVVVIVAVICT) traverse the membrane as a helical segment. The Cytoplasmic portion of the chain corresponds to 1123-1447 (RRSSAQQRKK…QLNAITGSAF (325 aa)). 2 disordered regions span residues 1126–1153 (SAQQ…PPDL) and 1166–1220 (EKPT…MSTL). Positions 1129 to 1143 (QRKKRATHSVSKRKG) are enriched in basic residues. The segment covering 1144 to 1153 (SQKDLRPPDL) has biased composition (basic and acidic residues). Ser1178 is subject to Phosphoserine; by MAPK1. The span at 1179-1220 (PIQSCQDLTPVSHSQSETQMGSKSASHSGQDTEDAGSSMSTL) shows a compositional bias: polar residues. A Phosphothreonine; by MAPK1 modification is found at Thr1187. At Ser1267 the chain carries Phosphoserine; by MAPK1. 2 disordered regions span residues 1291 to 1329 (RGFG…APSR) and 1394 to 1419 (LLPV…PASV). The span at 1297 to 1311 (RTQSVSEGPTTQQQP) shows a compositional bias: polar residues.

Belongs to the immunoglobulin superfamily. DCC family. In terms of assembly, interacts with the cytoplasmic part of UNC5A, UNC5B, UNC5C and probably UNC5D. Interacts with MAPK1. Interacts with NTN1. Interacts with DSCAM. Interacts with PTK2/FAK1. Interacts with MYO10. Interacts with CBLN4; this interaction can be competed by NTN1. Interacts with SIAH1 and SIAH2. Post-translationally, ubiquitinated; mediated by SIAH1 or SIAH2 and leading to its subsequent proteasomal degradation. In terms of tissue distribution, in the embryo, expressed at high levels in the developing brain and neural tube. In the embryo, expressed in developing neurons of the telencephalic cortical plate and in developing brainstem nuclei. In adult, highly expressed in brain with very low levels found in testis, heart and thymus. Isoform C is expressed only in the embryo.

It is found in the membrane. Functionally, receptor for netrin required for axon guidance. Mediates axon attraction of neuronal growth cones in the developing nervous system upon ligand binding. Its association with UNC5 proteins may trigger signaling for axon repulsion. It also acts as a dependence receptor required for apoptosis induction when not associated with netrin ligand. Implicated as a tumor suppressor gene. This is Netrin receptor DCC (Dcc) from Mus musculus (Mouse).